A 223-amino-acid polypeptide reads, in one-letter code: B-cell antigen receptor complex-associated protein alpha chain (223 aa).

The N-terminal stretch at 1–31 (MPEGPQALQSPPATIFLLLISAAGLGPGCQA) is a signal peptide. An Ig-like C2-type domain is found at 32–120 (LWVEWGPPSV…KIQRSCGTYL (89 aa)). The Extracellular segment spans residues 32 to 140 (LWVEWGPPSV…LDMGEGTKNN (109 aa)). Cysteines 53 and 104 form a disulfide. Residues N56, N61, N71, and N95 are each glycosylated (N-linked (GlcNAc...) asparagine). A helical transmembrane segment spans residues 141 to 161 (IITAEGIILLICAVVPGTLLL). Residues 162–223 (FRKRWQNMKF…HIGDAQLEKP (62 aa)) lie on the Cytoplasmic side of the membrane. The 29-residue stretch at 174–202 (DIQDDYEDENLYEGLNLDDCSMYEDISRG) folds into the ITAM domain. The residue at position 185 (Y185) is a Phosphotyrosine; by SRC-type Tyr-kinases. The residue at position 196 (Y196) is a Phosphotyrosine. R201 carries the post-translational modification Asymmetric dimethylarginine; by PRMT1. Residue Y207 is modified to Phosphotyrosine; by Tyr-kinases.

In terms of assembly, heterodimer of alpha and beta chains; disulfide-linked. Part of the B-cell antigen receptor complex where the alpha/beta chain heterodimer is non-covalently associated with an antigen-specific membrane-bound surface immunoglobulin of two heavy chains and two light chains. Interacts through its phosphorylated ITAM domain with the SH2 domains of SYK which stimulates SYK autophosphorylation and activation. Also interacts, when phosphorylated on Tyr-207, with the SH2 domain of BLNK/SLP65, bringing BLNK into proximity with SYK and allowing SYK to phosphorylate BLNK which is necessary for trafficking of the BCR to late endosomes. Interacts with Src-family tyrosine kinases including FYN and LYN, increasing their activity. Phosphorylated on tyrosine, serine and threonine residues upon B-cell activation. Phosphorylation of tyrosine residues by Src-family kinases, including LYN, is an early and essential feature of the BCR signaling cascade. The phosphorylated tyrosines serve as docking sites for SH2-domain containing kinases, leading to their activation which in turn leads to phosphorylation of downstream targets. Phosphorylation of serine and threonine residues may prevent subsequent tyrosine phosphorylation. Post-translationally, arginine methylation in the ITAM domain may interfere with the binding of SYK. It promotes signals leading to B-cell differentiation. B-cells.

The protein resides in the cell membrane. Functionally, required in cooperation with CD79B for initiation of the signal transduction cascade activated by binding of antigen to the B-cell antigen receptor complex (BCR) which leads to internalization of the complex, trafficking to late endosomes and antigen presentation. Also required for BCR surface expression and for efficient differentiation of pro- and pre-B-cells. Stimulates SYK autophosphorylation and activation. Binds to BLNK, bringing BLNK into proximity with SYK and allowing SYK to phosphorylate BLNK. Also interacts with and increases activity of some Src-family tyrosine kinases. Represses BCR signaling during development of immature B-cells. This Bos taurus (Bovine) protein is B-cell antigen receptor complex-associated protein alpha chain (CD79A).